The following is a 286-amino-acid chain: Tyrosine recombinase Tlet_1492 (286 aa).

Residues 1-86 (MERILQNFSD…SLRSFFNYLQ (86 aa)) enclose the Core-binding (CB) domain. In terms of domain architecture, Tyr recombinase spans 107–280 (RIPDFLLPSE…VDQEKFDAIN (174 aa)). Residues arginine 143, lysine 168, histidine 232, arginine 235, and histidine 258 contribute to the active site. Tyrosine 267 serves as the catalytic O-(3'-phospho-DNA)-tyrosine intermediate.

The protein belongs to the 'phage' integrase family.

It localises to the cytoplasm. Site-specific tyrosine recombinase, which acts by catalyzing the cutting and rejoining of the recombining DNA molecules. This chain is Tyrosine recombinase Tlet_1492, found in Pseudothermotoga lettingae (strain ATCC BAA-301 / DSM 14385 / NBRC 107922 / TMO) (Thermotoga lettingae).